Consider the following 114-residue polypeptide: YEKIGAEMVKEVAKKTDDVAGDGTTTATVLAQALVKEGLRNVAAGANPLGLKRGIEKAVEKVTETLLKSAKEVETKEQIAATAAISAGEQSIGDLIAEAMDKVGNEGVITVEES.

22–26 (DGTTT) serves as a coordination point for ATP.

The protein belongs to the chaperonin (HSP60) family. In terms of assembly, forms a cylinder of 14 subunits composed of two heptameric rings stacked back-to-back. Interacts with the co-chaperonin GroES.

It localises to the cytoplasm. The enzyme catalyses ATP + H2O + a folded polypeptide = ADP + phosphate + an unfolded polypeptide.. Functionally, together with its co-chaperonin GroES, plays an essential role in assisting protein folding. The GroEL-GroES system forms a nano-cage that allows encapsulation of the non-native substrate proteins and provides a physical environment optimized to promote and accelerate protein folding. The polypeptide is Chaperonin GroEL (Mycobacterium ulcerans).